Here is a 285-residue protein sequence, read N- to C-terminus: Bis(5'-nucleosyl)-tetraphosphatase, symmetrical (285 aa).

The protein belongs to the Ap4A hydrolase family.

The catalysed reaction is P(1),P(4)-bis(5'-adenosyl) tetraphosphate + H2O = 2 ADP + 2 H(+). Functionally, hydrolyzes diadenosine 5',5'''-P1,P4-tetraphosphate to yield ADP. This Colwellia psychrerythraea (strain 34H / ATCC BAA-681) (Vibrio psychroerythus) protein is Bis(5'-nucleosyl)-tetraphosphatase, symmetrical.